Here is a 245-residue protein sequence, read N- to C-terminus: Derlin-1 (245 aa).

Over Met1–Trp17 the chain is Cytoplasmic. Residues Leu18 to Leu38 form a helical membrane-spanning segment. At His39–Leu58 the chain is on the lumenal side. The helical transmembrane segment at Phe59–Val79 threads the bilayer. Residues Gln80–Tyr99 lie on the Cytoplasmic side of the membrane. Residues Leu100 to Leu120 form a helical membrane-spanning segment. Residues Met121–Trp156 are Lumenal-facing. A helical transmembrane segment spans residues Val157–Val177. Topologically, residues Gly178 to Asn245 are cytoplasmic. Residues Phe218 to Asn245 form a disordered region.

This sequence belongs to the derlin family.

It is found in the endoplasmic reticulum membrane. Its function is as follows. May be involved in the degradation process of specific misfolded endoplasmic reticulum (ER) luminal proteins. May also involved in endoplasmic reticulum stress-induced pre-emptive quality control, a mechanism that selectively attenuates the translocation of newly synthesized proteins into the endoplasmic reticulum and reroutes them to the cytosol for proteasomal degradation. This Drosophila melanogaster (Fruit fly) protein is Derlin-1.